Consider the following 85-residue polypeptide: Small ribosomal subunit protein bS18A (85 aa).

The protein belongs to the bacterial ribosomal protein bS18 family. In terms of assembly, part of the 30S ribosomal subunit. Forms a tight heterodimer with protein bS6.

In terms of biological role, binds as a heterodimer with protein bS6 to the central domain of the 16S rRNA, where it helps stabilize the platform of the 30S subunit. In Mycolicibacterium smegmatis (strain ATCC 700084 / mc(2)155) (Mycobacterium smegmatis), this protein is Small ribosomal subunit protein bS18A.